Reading from the N-terminus, the 273-residue chain is Dermonecrotic toxin LhSicTox-alphaIA2aii (273 aa).

Histidine 5 is a catalytic residue. Mg(2+) is bound by residues glutamate 25 and aspartate 27. The active-site Nucleophile is the histidine 41. 2 disulfide bridges follow: cysteine 45/cysteine 51 and cysteine 47/cysteine 190. Aspartate 85 lines the Mg(2+) pocket.

Belongs to the arthropod phospholipase D family. Class II subfamily. Mg(2+) is required as a cofactor. In terms of tissue distribution, expressed by the venom gland.

The protein localises to the secreted. The catalysed reaction is an N-(acyl)-sphingosylphosphocholine = an N-(acyl)-sphingosyl-1,3-cyclic phosphate + choline. It carries out the reaction an N-(acyl)-sphingosylphosphoethanolamine = an N-(acyl)-sphingosyl-1,3-cyclic phosphate + ethanolamine. It catalyses the reaction a 1-acyl-sn-glycero-3-phosphocholine = a 1-acyl-sn-glycero-2,3-cyclic phosphate + choline. The enzyme catalyses a 1-acyl-sn-glycero-3-phosphoethanolamine = a 1-acyl-sn-glycero-2,3-cyclic phosphate + ethanolamine. Its function is as follows. Dermonecrotic toxins cleave the phosphodiester linkage between the phosphate and headgroup of certain phospholipids (sphingolipid and lysolipid substrates), forming an alcohol (often choline) and a cyclic phosphate. This toxin acts on sphingomyelin (SM). It may also act on ceramide phosphoethanolamine (CPE), lysophosphatidylcholine (LPC) and lysophosphatidylethanolamine (LPE), but not on lysophosphatidylserine (LPS), and lysophosphatidylglycerol (LPG). It acts by transphosphatidylation, releasing exclusively cyclic phosphate products as second products. Induces dermonecrosis, hemolysis, increased vascular permeability, edema, inflammatory response, and platelet aggregation. The sequence is that of Dermonecrotic toxin LhSicTox-alphaIA2aii from Loxosceles hirsuta (Recluse spider).